Reading from the N-terminus, the 247-residue chain is tRNA (guanine-N(1)-)-methyltransferase (247 aa).

S-adenosyl-L-methionine-binding positions include G115 and I135–L140.

Belongs to the RNA methyltransferase TrmD family. Homodimer.

The protein localises to the cytoplasm. It catalyses the reaction guanosine(37) in tRNA + S-adenosyl-L-methionine = N(1)-methylguanosine(37) in tRNA + S-adenosyl-L-homocysteine + H(+). In terms of biological role, specifically methylates guanosine-37 in various tRNAs. In Alkaliphilus metalliredigens (strain QYMF), this protein is tRNA (guanine-N(1)-)-methyltransferase.